Reading from the N-terminus, the 403-residue chain is Ubiquitin-like modifier-activating enzyme 5 (403 aa).

ATP contacts are provided by Gly-81, Asp-102, Lys-125, Asn-148, and Asn-182. Residues Cys-224 and Cys-227 each coordinate Zn(2+). The active-site Glycyl thioester intermediate is the Cys-248. Zn(2+) contacts are provided by Cys-301 and Cys-306. Positions Val-333 to Val-345 match the UFM1-interacting sequence (UIS) motif. Residues Ser-346–Lys-376 are linker. Ser-357 and Ser-392 each carry phosphoserine. The UFC1-binding sequence (UFC) motif lies at Asp-388–Met-403.

Belongs to the ubiquitin-activating E1 family. UBA5 subfamily. As to quaternary structure, homodimer; homodimerization is required for UFM1 activation. Interacts (via UIS motif) with UFM1; binds UFM1 via a trans-binding mechanism in which UFM1 interacts with distinct sites in both subunits of the UBA5 homodimer. Interacts (via C-terminus) with UFC1. Interacts (via UIS motif) with GABARAPL2 and, with lower affinity, with GABARAP and GABARAPL1.

Its subcellular location is the cytoplasm. It is found in the nucleus. It localises to the endoplasmic reticulum membrane. The protein resides in the golgi apparatus. Functionally, E1-like enzyme which specifically catalyzes the first step in ufmylation. Activates UFM1 by first adenylating its C-terminal glycine residue with ATP, and thereafter linking this residue to the side chain of a cysteine residue in E1, yielding a UFM1-E1 thioester and free AMP. Activates UFM1 via a trans-binding mechanism, in which UFM1 interacts with distinct sites in both subunits of the UBA5 homodimer. Trans-binding also promotes stabilization of the UBA5 homodimer, and enhances ATP-binding. Transfer of UFM1 from UBA5 to the E2-like enzyme UFC1 also takes place using a trans mechanism. Ufmylation plays a key role in various processes, such as ribosome recycling, response to DNA damage, interferon response or reticulophagy (also called ER-phagy). Ufmylation is essential for erythroid differentiation of both megakaryocytes and erythrocytes. This is Ubiquitin-like modifier-activating enzyme 5 from Mus musculus (Mouse).